Consider the following 83-residue polypeptide: Neurotoxin LmNaTx34.5 (83 aa).

A signal peptide spans 1–15 (FILVVIALMVIEVKS). The 67-residue stretch at 16–82 (DGYLMVRAGR…IWTYEKNTCS (67 aa)) folds into the LCN-type CS-alpha/beta domain. 4 disulfide bridges follow: Cys29–Cys81, Cys33–Cys54, Cys40–Cys61, and Cys44–Cys63.

This sequence belongs to the long (4 C-C) scorpion toxin superfamily. Sodium channel inhibitor family. Beta subfamily. In terms of tissue distribution, expressed by the venom gland.

The protein resides in the secreted. Its function is as follows. Binds voltage-independently at site-4 of sodium channels (Nav) and shift the voltage of activation toward more negative potentials thereby affecting sodium channel activation and promoting spontaneous and repetitive firing. The polypeptide is Neurotoxin LmNaTx34.5 (Lychas mucronatus (Chinese swimming scorpion)).